The following is a 206-amino-acid chain: LexA repressor (206 aa).

The H-T-H motif DNA-binding region spans 28 to 48; it reads VREIGEAVGLASSSTVHGHLA. Active-site for autocatalytic cleavage activity residues include Ser128 and Lys166.

The protein belongs to the peptidase S24 family. Homodimer.

It catalyses the reaction Hydrolysis of Ala-|-Gly bond in repressor LexA.. In terms of biological role, represses a number of genes involved in the response to DNA damage (SOS response), including recA and lexA. In the presence of single-stranded DNA, RecA interacts with LexA causing an autocatalytic cleavage which disrupts the DNA-binding part of LexA, leading to derepression of the SOS regulon and eventually DNA repair. This chain is LexA repressor, found in Bacillus velezensis (strain DSM 23117 / BGSC 10A6 / LMG 26770 / FZB42) (Bacillus amyloliquefaciens subsp. plantarum).